Here is an 88-residue protein sequence, read N- to C-terminus: Small ribosomal subunit protein uS17 (88 aa).

The protein belongs to the universal ribosomal protein uS17 family. In terms of assembly, part of the 30S ribosomal subunit.

Its function is as follows. One of the primary rRNA binding proteins, it binds specifically to the 5'-end of 16S ribosomal RNA. The protein is Small ribosomal subunit protein uS17 of Lactobacillus helveticus (strain DPC 4571).